The sequence spans 541 residues: MNCRELPLTLWVLISVSTAESCTSRPHITVVEGEPFYLKHCSCSLAHEIETTTKSWYKSSGSQEHVELNPRSSSRIALHDCVLEFWPVELNDTGSYFFQMKNYTQKWKLNVIRRNKHSCFTERQVTSKIVEVKKFFQITCENSYYQTLVNSTSLYKNCKKLLLENNKNPTIKKNAEFEDQGYYSCVHFLHHNGKLFNITKTFNITIVEDRSNIVPVLLGPKLNHVAVELGKNVRLNCSALLNEEDVIYWMFGEENGSDPNIHEEKEMRIMTPEGKWHASKVLRIENIGESNLNVLYNCTVASTGGTDTKSFILVRKADMADIPGHVFTRGMIIAVLILVAVVCLVTVCVIYRVDLVLFYRHLTRRDETLTDGKTYDAFVSYLKECRPENGEEHTFAVEILPRVLEKHFGYKLCIFERDVVPGGAVVDEIHSLIEKSRRLIIVLSKSYMSNEVRYELESGLHEALVERKIKIILIEFTPVTDFTFLPQSLKLLKSHRVLKWKADKSLSYNSRFWKNLLYLMPAKTVKPGRDEPEVLPVLSES.

The first 18 residues, 1–18 (MNCRELPLTLWVLISVST), serve as a signal peptide directing secretion. Cystine bridges form between Cys-22–Cys-41 and Cys-43–Cys-81. At 22–329 (CTSRPHITVV…ADIPGHVFTR (308 aa)) the chain is on the extracellular side. Ig-like C2-type domains are found at residues 33–121 (GEPF…SCFT), 133–212 (KKFF…DRSN), and 220–312 (PKLN…KSFI). Asn-91, Asn-102, Asn-150, Asn-197, Asn-203, Asn-236, Asn-255, and Asn-297 each carry an N-linked (GlcNAc...) asparagine glycan. Cystine bridges form between Cys-119–Cys-158 and Cys-140–Cys-185. The cysteines at positions 237 and 298 are disulfide-linked. A helical membrane pass occupies residues 330-350 (GMIIAVLILVAVVCLVTVCVI). The Cytoplasmic portion of the chain corresponds to 351-541 (YRVDLVLFYR…PEVLPVLSES (191 aa)). The TIR domain maps to 373–520 (KTYDAFVSYL…RFWKNLLYLM (148 aa)). Residue Glu-455 is part of the active site.

Belongs to the interleukin-1 receptor family. As to quaternary structure, forms a ternary complex with IL18 and IL18RAP. Within this complex, IL18R1 is involved in ligand-binding and IL18RAP in signaling leading to NF-kappa-B and JNK activation. Interacts with SLC12A3 in peritoneal macrophages; this interaction is increased by IL18 treatment. In terms of processing, N-glycosylated. N-linked glycosyl chains contribute to ligand recognition and intra-receptor interactions required for formation of an active ternary receptor complex. Highly expressed in leukocytes, spleen, lung. Also expressed, but at lower levels, in liver, small intestine, colon, prostate, thymus, placenta, and heart. Specifically coexpressed with IL18R1 in Th1 cells.

The protein localises to the membrane. The catalysed reaction is NAD(+) + H2O = ADP-D-ribose + nicotinamide + H(+). Its function is as follows. Within the IL18 receptor complex, responsible for the binding of the pro-inflammatory cytokine IL18, but not IL1A nor IL1B. Involved in IL18-mediated IFNG synthesis from T-helper 1 (Th1) cells. Contributes to IL18-induced cytokine production, either independently of SLC12A3, or as a complex with SLC12A3. In Homo sapiens (Human), this protein is Interleukin-18 receptor 1.